The following is a 307-amino-acid chain: MTRLAVSLPGLNLKNPIMPASGCFGFGAEYAEYYDLSVLGSIMVKATTLEPRRGNPVIRVAETPGGMLNAIGLQNPGLDVVMAEKLPWLAEHFPDLPIIANVAGYTTEDYVRVCEVISTAPNVAAVEINISCPNVKRGGITFGTNVTAAHDLTQAVVAAASVPVYVKLSPNVTDITEIARATADAGADGLTLINTLTGMRINLARRTPVIANATGGLSGPAVLPIAVRMIDAVTRVVDIPVIGMGGVMTSADALELMMAGASAVGVGTANFTDPLACPKIINGLEPLMDDLSIASLEDLRTQVRQSR.

FMN is bound by residues Ser-21 and 45–46 (KA). Residues Lys-45 and 69–73 (NAIGL) each bind substrate. FMN is bound by residues Asn-101 and Asn-129. Residue Asn-129 participates in substrate binding. Cys-132 (nucleophile) is an active-site residue. Residues Lys-167 and Ile-193 each contribute to the FMN site. Residue 194–195 (NT) coordinates substrate. Residues Gly-219, 245–246 (GG), and 267–268 (GT) contribute to the FMN site.

Belongs to the dihydroorotate dehydrogenase family. Type 1 subfamily. In terms of assembly, heterotetramer of 2 PyrK and 2 PyrD type B subunits. FMN is required as a cofactor.

Its subcellular location is the cytoplasm. The enzyme catalyses (S)-dihydroorotate + NAD(+) = orotate + NADH + H(+). The protein operates within pyrimidine metabolism; UMP biosynthesis via de novo pathway; orotate from (S)-dihydroorotate (NAD(+) route): step 1/1. Catalyzes the conversion of dihydroorotate to orotate with NAD(+) as electron acceptor. In Cutibacterium acnes (strain DSM 16379 / KPA171202) (Propionibacterium acnes), this protein is Dihydroorotate dehydrogenase B (NAD(+)), catalytic subunit (pyrD).